The primary structure comprises 421 residues: Enolase (421 aa).

Residue Q162 coordinates (2R)-2-phosphoglycerate. E204 acts as the Proton donor in catalysis. D241, E284, and D311 together coordinate Mg(2+). 4 residues coordinate (2R)-2-phosphoglycerate: K336, R365, S366, and K387. The active-site Proton acceptor is K336.

The protein belongs to the enolase family. The cofactor is Mg(2+).

The protein localises to the cytoplasm. It localises to the secreted. Its subcellular location is the cell surface. It carries out the reaction (2R)-2-phosphoglycerate = phosphoenolpyruvate + H2O. The protein operates within carbohydrate degradation; glycolysis; pyruvate from D-glyceraldehyde 3-phosphate: step 4/5. Catalyzes the reversible conversion of 2-phosphoglycerate (2-PG) into phosphoenolpyruvate (PEP). It is essential for the degradation of carbohydrates via glycolysis. This chain is Enolase, found in Nitratiruptor sp. (strain SB155-2).